A 422-amino-acid chain; its full sequence is Histidinol dehydrogenase (422 aa).

NAD(+)-binding residues include Tyr-123, Gln-183, and Asn-206. Ser-229, Gln-251, and His-254 together coordinate substrate. Zn(2+) contacts are provided by Gln-251 and His-254. Catalysis depends on proton acceptor residues Glu-320 and His-321. Substrate-binding residues include His-321, Asp-354, Glu-408, and His-413. Asp-354 is a binding site for Zn(2+). His-413 provides a ligand contact to Zn(2+).

It belongs to the histidinol dehydrogenase family. Zn(2+) is required as a cofactor.

The catalysed reaction is L-histidinol + 2 NAD(+) + H2O = L-histidine + 2 NADH + 3 H(+). It functions in the pathway amino-acid biosynthesis; L-histidine biosynthesis; L-histidine from 5-phospho-alpha-D-ribose 1-diphosphate: step 9/9. Its function is as follows. Catalyzes the sequential NAD-dependent oxidations of L-histidinol to L-histidinaldehyde and then to L-histidine. The protein is Histidinol dehydrogenase of Haloarcula marismortui (strain ATCC 43049 / DSM 3752 / JCM 8966 / VKM B-1809) (Halobacterium marismortui).